The following is a 434-amino-acid chain: Methylenetetrahydrofolate--tRNA-(uracil-5-)-methyltransferase TrmFO (434 aa).

10-15 (GAGLAG) provides a ligand contact to FAD.

The protein belongs to the MnmG family. TrmFO subfamily. FAD is required as a cofactor.

Its subcellular location is the cytoplasm. The catalysed reaction is uridine(54) in tRNA + (6R)-5,10-methylene-5,6,7,8-tetrahydrofolate + NADH + H(+) = 5-methyluridine(54) in tRNA + (6S)-5,6,7,8-tetrahydrofolate + NAD(+). It carries out the reaction uridine(54) in tRNA + (6R)-5,10-methylene-5,6,7,8-tetrahydrofolate + NADPH + H(+) = 5-methyluridine(54) in tRNA + (6S)-5,6,7,8-tetrahydrofolate + NADP(+). In terms of biological role, catalyzes the folate-dependent formation of 5-methyl-uridine at position 54 (M-5-U54) in all tRNAs. The polypeptide is Methylenetetrahydrofolate--tRNA-(uracil-5-)-methyltransferase TrmFO (Bacillus mycoides (strain KBAB4) (Bacillus weihenstephanensis)).